The chain runs to 153 residues: MAPKAEKKPAAKKPAEEEPAAEKAEKAPAGKKPKAEKRLPAGKGEKGSGEGKKAGRKKGKKSVETYKIYIFKVLKQVHPDIGISSKAMSIMNSFINDIFEKLAGESAKLARYNKKPTITSREIQTAVRLVLPGELAKHAVSEGTKAVTKFTSS.

2 stretches are compositionally biased toward basic and acidic residues: residues 1 to 28 (MAPKAEKKPAAKKPAEEEPAAEKAEKAP) and 36 to 53 (EKRLPAGKGEKGSGEGKK). Residues 1–60 (MAPKAEKKPAAKKPAEEEPAAEKAEKAPAGKKPKAEKRLPAGKGEKGSGEGKKAGRKKGK) are disordered. 2 positions are modified to N6-acetyllysine: Lys7 and Lys37. Residue Lys149 forms a Glycyl lysine isopeptide (Lys-Gly) (interchain with G-Cter in ubiquitin) linkage.

Belongs to the histone H2B family. As to quaternary structure, the nucleosome is a histone octamer containing two molecules each of H2A, H2B, H3 and H4 assembled in one H3-H4 heterotetramer and two H2A-H2B heterodimers. The octamer wraps approximately 147 bp of DNA. Post-translationally, can be acetylated to form H2BK6ac and H2BK33ac. Monoubiquitinated by BRE1 to form H2BK143ub1 and deubiquitinated by UBP26. Required for heterochromatic histone H3 di- and trimethylation at H3K4me. May give a specific tag for epigenetic transcriptional activation.

The protein localises to the nucleus. The protein resides in the chromosome. Core component of nucleosome. Nucleosomes wrap and compact DNA into chromatin, limiting DNA accessibility to the cellular machineries which require DNA as a template. Histones thereby play a central role in transcription regulation, DNA repair, DNA replication and chromosomal stability. DNA accessibility is regulated via a complex set of post-translational modifications of histones, also called histone code, and nucleosome remodeling. The sequence is that of Histone H2B.6 (H2B.6) from Oryza sativa subsp. indica (Rice).